The following is a 309-amino-acid chain: Glutaminase (309 aa).

Substrate contacts are provided by serine 64, asparagine 114, glutamate 160, asparagine 167, tyrosine 191, tyrosine 243, and valine 261.

The protein belongs to the glutaminase family. In terms of assembly, homotetramer.

The enzyme catalyses L-glutamine + H2O = L-glutamate + NH4(+). In Agrobacterium fabrum (strain C58 / ATCC 33970) (Agrobacterium tumefaciens (strain C58)), this protein is Glutaminase.